A 109-amino-acid chain; its full sequence is Nucleoid-associated protein Spro_1136 (109 aa).

2 disordered regions span residues 1 to 21 and 90 to 109; these read MFGKGGLGNLMKQAQQMQEKM and EKMASVSNGMQLPPGFKMPF. Residues 11–21 show a composition bias toward low complexity; that stretch reads MKQAQQMQEKM.

It belongs to the YbaB/EbfC family. As to quaternary structure, homodimer.

It localises to the cytoplasm. The protein localises to the nucleoid. In terms of biological role, binds to DNA and alters its conformation. May be involved in regulation of gene expression, nucleoid organization and DNA protection. The polypeptide is Nucleoid-associated protein Spro_1136 (Serratia proteamaculans (strain 568)).